The chain runs to 326 residues: MPPAISAFQAAYIGIEVLIALVSVPGNVLVIWAVKVNQALRDATFCFIVSLAVADVAVGALVIPLAILINIGPRTYFHTCLMVACPVLILTQSSILALLAIAVDRYLRVKIPLRYKTVVTPRRAAVAIAGCWILSFVVGLTPLFGWNRLGEAQRAWAANGSGGEPVIKCEFEKVISMEYMVYFNFFVWVLPPLLLMVLIYLEVFYLIRRQLGKKVSASSGDPQKYYGKELKIAKSLALILFLFALSWLPLHILNCITLFCPSCRKPSILMYIAIFLTHGNSAMNPIVYAFRIQKFRVTFLKIWNDHFRCQPTPPVDEDPPEEAPHD.

At 1 to 10 the chain is on the extracellular side; that stretch reads MPPAISAFQA. A helical transmembrane segment spans residues 11-33; it reads AYIGIEVLIALVSVPGNVLVIWA. The Cytoplasmic segment spans residues 34 to 46; the sequence is VKVNQALRDATFC. The chain crosses the membrane as a helical span at residues 47 to 69; it reads FIVSLAVADVAVGALVIPLAILI. Residues 70 to 80 lie on the Extracellular side of the membrane; that stretch reads NIGPRTYFHTC. Cys80 and Cys169 are joined by a disulfide. The chain crosses the membrane as a helical span at residues 81–102; that stretch reads LMVACPVLILTQSSILALLAIA. Residues 103-123 are Cytoplasmic-facing; that stretch reads VDRYLRVKIPLRYKTVVTPRR. The helical transmembrane segment at 124-146 threads the bilayer; the sequence is AAVAIAGCWILSFVVGLTPLFGW. The Extracellular portion of the chain corresponds to 147 to 176; that stretch reads NRLGEAQRAWAANGSGGEPVIKCEFEKVIS. Asn159 carries N-linked (GlcNAc...) asparagine glycosylation. A helical transmembrane segment spans residues 177-201; the sequence is MEYMVYFNFFVWVLPPLLLMVLIYL. Residues 202-235 lie on the Cytoplasmic side of the membrane; that stretch reads EVFYLIRRQLGKKVSASSGDPQKYYGKELKIAKS. A helical transmembrane segment spans residues 236–259; that stretch reads LALILFLFALSWLPLHILNCITLF. The Extracellular segment spans residues 260–267; sequence CPSCRKPS. Residues 268–292 traverse the membrane as a helical segment; it reads ILMYIAIFLTHGNSAMNPIVYAFRI. At 293–326 the chain is on the cytoplasmic side; it reads QKFRVTFLKIWNDHFRCQPTPPVDEDPPEEAPHD. Cys309 carries S-palmitoyl cysteine lipidation.

This sequence belongs to the G-protein coupled receptor 1 family.

The protein resides in the cell membrane. Its function is as follows. Receptor for adenosine. The activity of this receptor is mediated by G proteins which inhibit adenylyl cyclase. The sequence is that of Adenosine receptor A1 (ADORA1) from Canis lupus familiaris (Dog).